A 127-amino-acid chain; its full sequence is Small ribosomal subunit protein eS6 (127 aa).

The protein belongs to the eukaryotic ribosomal protein eS6 family.

The sequence is that of Small ribosomal subunit protein eS6 from Picrophilus torridus (strain ATCC 700027 / DSM 9790 / JCM 10055 / NBRC 100828 / KAW 2/3).